Reading from the N-terminus, the 166-residue chain is Zinc finger CCHC domain-containing protein 13 (166 aa).

The segment at 4–21 (KDFFACGHSGHWARGCPR) adopts a CCHC-type 1; degenerate zinc-finger fold. The CCHC-type 2; degenerate zinc finger occupies 45–62 (YTCYCCGESGRNAKNCVL). CCHC-type zinc fingers lie at residues 65–82 (NICY…DCKD), 89–106 (QHCY…DCDR), 110–127 (QKCY…DCAQ), and 128–145 (VKCY…NCSK).

This Homo sapiens (Human) protein is Zinc finger CCHC domain-containing protein 13 (ZCCHC13).